The chain runs to 242 residues: Probable transcriptional regulatory protein Bcep18194_A5621 (242 aa).

This sequence belongs to the TACO1 family.

The protein localises to the cytoplasm. This chain is Probable transcriptional regulatory protein Bcep18194_A5621, found in Burkholderia lata (strain ATCC 17760 / DSM 23089 / LMG 22485 / NCIMB 9086 / R18194 / 383).